We begin with the raw amino-acid sequence, 251 residues long: ATP synthase delta chain, chloroplastic (251 aa).

The transit peptide at 1 to 64 (MASLQHTTAS…STGGALGARM (64 aa)) directs the protein to the chloroplast.

It belongs to the ATPase delta chain family. As to quaternary structure, F-type ATPases have 2 components, CF(1) - the catalytic core - and CF(0) - the membrane proton channel. CF(1) has five subunits: alpha(3), beta(3), gamma(1), delta(1), epsilon(1). CF(0) has three main subunits: a, b and c.

The protein resides in the plastid. Its subcellular location is the chloroplast thylakoid membrane. Functionally, this protein seems to be part of the stalk that links CF(0) to CF(1). It either transmits conformational changes from CF(0) into CF(1) or is implicated in proton conduction. This chain is ATP synthase delta chain, chloroplastic (ATPD), found in Pisum sativum (Garden pea).